The chain runs to 296 residues: m7GpppN-mRNA hydrolase NUDT17 (296 aa).

Residues 90 to 236 (GRGVDVGVAV…DSGSPCGPLP (147 aa)) enclose the Nudix hydrolase domain. Positions 129–150 (GHVELGEQLLEAGLRELQEETG) match the Nudix box motif. Positions 144 and 148 each coordinate Mg(2+).

The protein belongs to the Nudix hydrolase family. Mg(2+) serves as cofactor. It depends on Mn(2+) as a cofactor.

It carries out the reaction a 5'-end (N(7)-methyl 5'-triphosphoguanosine)-ribonucleoside in mRNA + H2O = N(7)-methyl-GDP + a 5'-end phospho-ribonucleoside in mRNA + 2 H(+). Functionally, acts as a decapping enzyme capable of hydrolyzing monomethylated capped RNAs (in vitro). Hydrolyzes monomethylated capped RNA after alpha and beta phosphates to form N(7)-methyl-GDP. Shows low activity towards unmethylated capped RNA. The sequence is that of m7GpppN-mRNA hydrolase NUDT17 (nudt17) from Xenopus laevis (African clawed frog).